We begin with the raw amino-acid sequence, 160 residues long: MAFKRKVLGKTDYGRRLRLLKSKDRRFIVRITNKGIIAQIAEYSVNGDRILATITDKALSKYGIELRGNNLQICYLVGYAAGVEAQKAGVETAVLDIGRKKFRKGGRIAACLKGITDSGVDIPHGEDVFPDKKRLNGSHLKNPVKLNEAVKNFKKLEEKA.

The protein belongs to the universal ribosomal protein uL18 family. Part of the 50S ribosomal subunit. Contacts the 5S and 23S rRNAs.

In terms of biological role, this is one of the proteins that bind and probably mediate the attachment of the 5S RNA into the large ribosomal subunit, where it forms part of the central protuberance. The sequence is that of Large ribosomal subunit protein uL18 from Thermoplasma volcanium (strain ATCC 51530 / DSM 4299 / JCM 9571 / NBRC 15438 / GSS1).